The chain runs to 72 residues: Translation initiation factor IF-1 (72 aa).

An S1-like domain is found at 1 to 72 (MSKEEAIEVE…TRGRITYRAK (72 aa)).

Belongs to the IF-1 family. As to quaternary structure, component of the 30S ribosomal translation pre-initiation complex which assembles on the 30S ribosome in the order IF-2 and IF-3, IF-1 and N-formylmethionyl-tRNA(fMet); mRNA recruitment can occur at any time during PIC assembly.

The protein resides in the cytoplasm. In terms of biological role, one of the essential components for the initiation of protein synthesis. Stabilizes the binding of IF-2 and IF-3 on the 30S subunit to which N-formylmethionyl-tRNA(fMet) subsequently binds. Helps modulate mRNA selection, yielding the 30S pre-initiation complex (PIC). Upon addition of the 50S ribosomal subunit IF-1, IF-2 and IF-3 are released leaving the mature 70S translation initiation complex. The chain is Translation initiation factor IF-1 from Geotalea uraniireducens (strain Rf4) (Geobacter uraniireducens).